Reading from the N-terminus, the 375-residue chain is DNA replication and repair protein RecF (375 aa).

ATP is bound at residue 30 to 37 (GENAQGKT).

This sequence belongs to the RecF family.

It localises to the cytoplasm. The RecF protein is involved in DNA metabolism; it is required for DNA replication and normal SOS inducibility. RecF binds preferentially to single-stranded, linear DNA. It also seems to bind ATP. This is DNA replication and repair protein RecF from Bacillus anthracis (strain A0248).